A 487-amino-acid polypeptide reads, in one-letter code: N-succinylglutamate 5-semialdehyde dehydrogenase (487 aa).

Residues 1–23 (MTHFIKGQWHTGKGHDVASSNPA) are disordered. 220–225 (GSSRTG) contacts NAD(+). Active-site residues include Glu243 and Cys277.

The protein belongs to the aldehyde dehydrogenase family. AstD subfamily.

The catalysed reaction is N-succinyl-L-glutamate 5-semialdehyde + NAD(+) + H2O = N-succinyl-L-glutamate + NADH + 2 H(+). The protein operates within amino-acid degradation; L-arginine degradation via AST pathway; L-glutamate and succinate from L-arginine: step 4/5. Functionally, catalyzes the NAD-dependent reduction of succinylglutamate semialdehyde into succinylglutamate. The sequence is that of N-succinylglutamate 5-semialdehyde dehydrogenase from Shewanella oneidensis (strain ATCC 700550 / JCM 31522 / CIP 106686 / LMG 19005 / NCIMB 14063 / MR-1).